Consider the following 388-residue polypeptide: Chorismate synthase (388 aa).

NADP(+) is bound by residues Arg-39 and Arg-45. FMN-binding positions include 130–132 (RSS), 251–252 (NA), Gly-296, 311–315 (KPIPT), and Arg-337.

This sequence belongs to the chorismate synthase family. Homotetramer. FMNH2 serves as cofactor.

It catalyses the reaction 5-O-(1-carboxyvinyl)-3-phosphoshikimate = chorismate + phosphate. The protein operates within metabolic intermediate biosynthesis; chorismate biosynthesis; chorismate from D-erythrose 4-phosphate and phosphoenolpyruvate: step 7/7. Its function is as follows. Catalyzes the anti-1,4-elimination of the C-3 phosphate and the C-6 proR hydrogen from 5-enolpyruvylshikimate-3-phosphate (EPSP) to yield chorismate, which is the branch point compound that serves as the starting substrate for the three terminal pathways of aromatic amino acid biosynthesis. This reaction introduces a second double bond into the aromatic ring system. The polypeptide is Chorismate synthase (Streptococcus pyogenes serotype M49 (strain NZ131)).